We begin with the raw amino-acid sequence, 228 residues long: Isoprenyl transferase (228 aa).

D15 is a catalytic residue. D15 contacts Mg(2+). Substrate is bound by residues 16-19 (GNGR), W20, R28, H32, and 60-62 (STE). N63 serves as the catalytic Proton acceptor. Residues W64, R66, R176, and 182-184 (RLS) each bind substrate. E195 is a Mg(2+) binding site.

The protein belongs to the UPP synthase family. As to quaternary structure, homodimer. Mg(2+) serves as cofactor.

Its function is as follows. Catalyzes the condensation of isopentenyl diphosphate (IPP) with allylic pyrophosphates generating different type of terpenoids. The chain is Isoprenyl transferase from Wolinella succinogenes (strain ATCC 29543 / DSM 1740 / CCUG 13145 / JCM 31913 / LMG 7466 / NCTC 11488 / FDC 602W) (Vibrio succinogenes).